Consider the following 256-residue polypeptide: 4-hydroxy-tetrahydrodipicolinate reductase (256 aa).

Position 8-13 (8-13 (GATGRV)) interacts with NAD(+). Lysine 36 is a binding site for NADP(+). Residues 89-91 (GTT) and 113-116 (ATNM) each bind NAD(+). Histidine 145 functions as the Proton donor/acceptor in the catalytic mechanism. Histidine 146 serves as a coordination point for (S)-2,3,4,5-tetrahydrodipicolinate. Catalysis depends on lysine 149, which acts as the Proton donor. 155 to 156 (GT) is a (S)-2,3,4,5-tetrahydrodipicolinate binding site.

This sequence belongs to the DapB family.

The protein resides in the cytoplasm. It catalyses the reaction (S)-2,3,4,5-tetrahydrodipicolinate + NAD(+) + H2O = (2S,4S)-4-hydroxy-2,3,4,5-tetrahydrodipicolinate + NADH + H(+). The enzyme catalyses (S)-2,3,4,5-tetrahydrodipicolinate + NADP(+) + H2O = (2S,4S)-4-hydroxy-2,3,4,5-tetrahydrodipicolinate + NADPH + H(+). Its pathway is amino-acid biosynthesis; L-lysine biosynthesis via DAP pathway; (S)-tetrahydrodipicolinate from L-aspartate: step 4/4. Functionally, catalyzes the conversion of 4-hydroxy-tetrahydrodipicolinate (HTPA) to tetrahydrodipicolinate. This chain is 4-hydroxy-tetrahydrodipicolinate reductase, found in Wolinella succinogenes (strain ATCC 29543 / DSM 1740 / CCUG 13145 / JCM 31913 / LMG 7466 / NCTC 11488 / FDC 602W) (Vibrio succinogenes).